Consider the following 185-residue polypeptide: Ribosome-recycling factor (185 aa).

The protein belongs to the RRF family.

The protein resides in the cytoplasm. Responsible for the release of ribosomes from messenger RNA at the termination of protein biosynthesis. May increase the efficiency of translation by recycling ribosomes from one round of translation to another. The sequence is that of Ribosome-recycling factor from Pseudothermotoga lettingae (strain ATCC BAA-301 / DSM 14385 / NBRC 107922 / TMO) (Thermotoga lettingae).